The sequence spans 166 residues: Putative glycine-rich cell wall structural protein 1 (166 aa).

A signal peptide spans 1 to 23; the sequence is MARKVIALAFLLLLTISLSKSNA. R2; Tyr-rich repeat units lie at residues 56-62 and 93-99; these read GYGYNYG and GYGYGYG. The disordered stretch occupies residues 105-125; it reads AQGQGSGGGGGGGGGGGGGGS. Residues 132-138 form an R2; Tyr-rich repeat; it reads GYGYGYG. Residues 144-160 show a composition bias toward gly residues; it reads GGGGGGDGGGGGGGGSA. The interval 144–166 is disordered; sequence GGGGGGDGGGGGGGGSAYVGRHE.

Its subcellular location is the secreted. It localises to the cell wall. Its function is as follows. Responsible for plasticity of the cell wall. The sequence is that of Putative glycine-rich cell wall structural protein 1 (GRP-1) from Oryza sativa subsp. japonica (Rice).